Consider the following 571-residue polypeptide: Mannan endo-1,4-beta-mannosidase B (571 aa).

Positions 1–19 (MNSLSLLLFCIFFVFSTFA) are cleaved as a signal peptide. Residues 22–141 (VYYEAENGKL…WMWVDAFVIN (120 aa)) form the CBM6 domain. The 295-residue stretch at 165–459 (PAAKKLYDFL…FTHKTVMNMD (295 aa)) folds into the GH26 domain. Substrate is bound at residue Trp286. Residue Glu319 is the Proton donor of the active site. Substrate is bound by residues Trp324 and Tyr379. Catalysis depends on Glu407, which acts as the Nucleophile. CBM10 domains follow at residues 491-527 (ECFS…CGIG) and 534-571 (VCWS…CGII).

The protein belongs to the glycosyl hydrolase 26 family.

It catalyses the reaction Random hydrolysis of (1-&gt;4)-beta-D-mannosidic linkages in mannans, galactomannans and glucomannans.. The protein is Mannan endo-1,4-beta-mannosidase B (MANB) of Piromyces sp.